Here is a 101-residue protein sequence, read N- to C-terminus: Urease subunit gamma (101 aa).

This sequence belongs to the urease gamma subunit family. Heterotrimer of UreA (gamma), UreB (beta) and UreC (alpha) subunits. Three heterotrimers associate to form the active enzyme.

It localises to the cytoplasm. It catalyses the reaction urea + 2 H2O + H(+) = hydrogencarbonate + 2 NH4(+). The protein operates within nitrogen metabolism; urea degradation; CO(2) and NH(3) from urea (urease route): step 1/1. The chain is Urease subunit gamma from Ureaplasma parvum serovar 3 (strain ATCC 27815 / 27 / NCTC 11736).